We begin with the raw amino-acid sequence, 263 residues long: MSDILNKIIAVKREEITDAINRKPLPAMRKDAESRVLTRDFVGALRAKIAAGKPAVIAEIKKASPSKGVLRADFIPADIAQSYAEFGAACLSVLTDQQFFQGSIDYLKQARASCSLPVLRKDFIIDAYQVYESRVMGADCILLIAACLDDAQMKTLEALAMSLDMAVLVEVHDEAELERALKLRTPLIGINNRNLNTFEVSLDTTLRLMGKVPAERLLVTESGITTPEDVKRMRDARVNAFLVGEAFMRADEPGVALAELFGE.

This sequence belongs to the TrpC family.

It catalyses the reaction 1-(2-carboxyphenylamino)-1-deoxy-D-ribulose 5-phosphate + H(+) = (1S,2R)-1-C-(indol-3-yl)glycerol 3-phosphate + CO2 + H2O. The protein operates within amino-acid biosynthesis; L-tryptophan biosynthesis; L-tryptophan from chorismate: step 4/5. This Polaromonas naphthalenivorans (strain CJ2) protein is Indole-3-glycerol phosphate synthase.